Consider the following 123-residue polypeptide: Ragulator complex protein LAMTOR3-A (123 aa).

This sequence belongs to the LAMTOR3 family. In terms of assembly, part of the Ragulator complex composed of lamtor1, lamtor2, lamtor3, lamtor4 and lamtor5. The Ragulator complex interacts with slc38a9; the probable amino acid sensor. Component of the lysosomal folliculin complex (LFC).

It localises to the late endosome membrane. In terms of biological role, as part of the Ragulator complex it is involved in amino acid sensing and activation of mTORC1, a signaling complex promoting cell growth in response to growth factors, energy levels, and amino acids. Activated by amino acids through a mechanism involving the lysosomal V-ATPase, the Ragulator plays a dual role for the small GTPases Rag (RagA/RRAGA, RagB/RRAGB, RagC/RRAGC and/or RagD/RRAGD): it (1) acts as a guanine nucleotide exchange factor (GEF), activating the small GTPases Rag and (2) mediates recruitment of Rag GTPases to the lysosome membrane. Activated Ragulator and Rag GTPases function as a scaffold recruiting mTORC1 to lysosomes where it is in turn activated. In Xenopus laevis (African clawed frog), this protein is Ragulator complex protein LAMTOR3-A (lamtor3-a).